A 2274-amino-acid polypeptide reads, in one-letter code: MTSSMASYEQLVRQVEALKAENTHLRQELRDNSSHLSKLETETSGMKEVLKHLQGKLEQEARVLVSSGQTEVLEQLKALQTDISSLYNLKFHAPALGPEPAARTPEGSPVHGSGPSKDSFGELSRATIRLLEELDQERCFLLSEIEKEEKEKLWYYSQLQGLSKRLDELPHVDTFSMQMDLIRQQLEFEAQHIRSLMEERFGTSDEMVQRAQIRASRLEQIDKELLEAQDRVQQTEPQALLAVKPVAVEEEQEAEVPTHPEDGTPQPGNSKVEVVFWLLSMLATRDQEDTARTLLAMSSSPESCVAMRRSGCLPLLLQILHGTEAGSVGRAGIPGAPGAKDARMRANAALHNIVFSQPDQGLARKEMRVLHVLEQIRAYCETCWDWLQARDSGTETPVPIEPQICQATCAVMKLSFDEEYRRAMNELGGLQAVAELLQVDYEMHKMTRDPLNLALRRYAGMTLTNLTFGDVANKATLCARRGCMEAIVAQLGSESEELHQVVSSILRNLSWRADINSKKVLREVGSMTALMECVLRASKESTLKSVLSALWNLSAHSTENKAAICQVDGALGFLVSTLTYRCQGNSLAVIESGGGILRNVSSLIATREDYRQVLRDHNCLQTLLQHLTSHSLTIVSNACGTLWNLSARSPRDQELLWDLGAVGMLRNLVHSKHKMIAMGSAAALRNLLAHRPAKYQAAAMAVSPGTCVPSLYVRKQRALEAELDTRHLVHALGHLEKQSLPEAETTSKKPLPPLRHLDGLVQDYASDSGCFDDDDAPSLAAAATTAEPASPAVMSMFLGGPFLQGQALARTPPARQGGLEAEKEAGGEAAVAAKAKAKLALAVARIDRLVEDISALHTSSDDSFSLSSGDPGQEAPREGRAQSCSPCRGTEGGRREAGSRAHPLLRLKAAHTSLSNDSLNSGSTSDGYCTREHMTPCPLAALAEHRDDPVRGQTRPRRLDLDLPSRAELPARDTAATDARVRTIKLSPTYQHVPLLDGAAGAGVRPLVGPGTSPGARKQAWIPADSLSKVPEKLVASPLPIASKVLQKLVAQDGPMSLSRCSSLSSLSSTGHAVPSQAENLDSDSSLEGLEEAGPGEAELGRAWRASGSTSLPVSIPAPQRGRSRGLGVEDATPSSSSENCVQETPLVLSRCSSVSSLGSFESRSIASSIPSDPCSGLGSGTVSPSELPDSPGQTMPPSRSKTPPAPPGQPETSQFSLQWESYVKRFLDIADCRERCQPPSELDAGSVRFTVEKPDENFSCASSLSALALHELYVQQDVELRLRPPACPERAVGGGGHRRRDEAASRLDGPAPAGSRARSATDKELEALRECLGAAMPARLRKVASALVPGRRSLPVPVYMLVPAPARGDDSGTDSAEGTPVNFSSAASLSDETLQGPSRDKPAGPGDRQKPTGRAAPARQTRSHRPKAAGAGKSTEHTRGPCRNRAGLELPLSRPQSARSNRDSSCQTRTRGDGALQSLCLTTPTEEAVYCFYDSDEEPPATAPPPRRASAIPRALKREKPAGRKETPSRAAQPATLPVRAQPRLIVDETPPCYSLTSSASSLSEPEAPEQPANHARGPEQGSKQDSSPSPRAEEELLQRCISLAMPRRRTQVPGSRRRKPRALRSDIRPTEITQKCQEEVAGSDPASDLDSVEWQAIQEGANSIVTWLHQAAAKASLEASSESDSLLSLVSGVSAGSTLQPSKLRKGRKPAAEAGGAWRPEKRGTTSTKINGSPRLPNGPEKAKGTQKMMAGESTMLRGRTVIYSAGPASRTQSKGISGPCTTPKKTGTSGTTQPETVTKAPSPEQQRSRSLHRPGKISELAALRHPPRSATPPARLAKTPSSSSSQTSPASQPLPRRSPLATPTGGPLPGPGGSLVPKSPARALLAKQHKTQKSPVRIPFMQRPARRVPPPLARPSPEPGSRGRAGAEGTPGARGSRLGLVRMASARSSGSESSDRSGFRRQLTFIKESPGLLRRRRSELSSADSTASTSQAASPRRGRPALPAVFLCSSRCDELRVSPRQPLAAQRSPQAKPGLAPLAPRRTSSESPSRLPVRASPGRPETVKRYASLPHISVSRRSDSAVSVPTTQANATRRGSDGEARPLPRVAPPGTTWRRIKDEDVPHILRSTLPATALPLRVSSPEDSPAGTPQRKTSDAVVQTEDVATSKTNSSTSPSLESRDPPQAPASGPVAPQGSDVDGPVLTKPPASAPFPHEGLSAVIAGFPTSRHGSPSRAARVPPFNYVPSPMAAATMASDSAVEKAPVSSPASLLE.

Positions 5 to 59 (MASYEQLVRQVEALKAENTHLRQELRDNSSHLSKLETETSGMKEVLKHLQGKLEQ) form a coiled coil. 2 disordered regions span residues 97–120 (GPEP…KDSF) and 248–269 (VEEE…QPGN). ARM repeat units follow at residues 301–341 (PESC…GAKD), 472–511 (ANKA…NLSW), 515–555 (INSK…NLSA), 557–602 (STEN…NVSS), 608–647 (EDYR…NLSA), and 650–689 (PRDQ…NLLA). Positions 832 to 856 (AAKAKAKLALAVARIDRLVEDISAL) form a coiled coil. Disordered regions lie at residues 859 to 901 (SSDD…GSRA), 1061 to 1143 (CSSL…NCVQ), and 1165 to 1216 (SIAS…TSQF). A compositionally biased stretch (low complexity) spans 861–870 (DDSFSLSSGD). Repeat 1 spans residues 1049–1068 (LVAQDGPMSLSRCSSLSSLS). The 5 X 20 AA approximate repeat of F-X-V-E-X-T-P-X-C-F-S-R-X-S-S-L-S-S-L-S stretch occupies residues 1049–1565 (LVAQDGPMSL…SLTSSASSLS (517 aa)). The tract at residues 1049–1565 (LVAQDGPMSL…SLTSSASSLS (517 aa)) is interaction with CTNNB1. Over residues 1077-1086 (QAENLDSDSS) the composition is skewed to polar residues. Residues 1092-1103 (EAGPGEAELGRA) are compositionally biased toward low complexity. Over residues 1133 to 1143 (TPSSSSENCVQ) the composition is skewed to polar residues. Repeat 2 spans residues 1140–1159 (NCVQETPLVLSRCSSVSSLG). The stretch at 1250–1269 (FTVEKPDENFSCASSLSALA) is repeat 3. Disordered regions lie at residues 1290 to 1323 (ERAV…SATD), 1368 to 1480 (RGDD…LQSL), 1493 to 1631 (FYDS…DIRP), 1699 to 2003 (STLQ…RGRP), 2022 to 2122 (PRQP…IKDE), and 2135 to 2274 (TALP…SLLE). Positions 1374-1397 (TDSAEGTPVNFSSAASLSDETLQG) are enriched in polar residues. The stretch at 1375–1394 (DSAEGTPVNFSSAASLSDET) is repeat 4. A compositionally biased stretch (basic and acidic residues) spans 1399–1411 (SRDKPAGPGDRQK). The span at 1455–1470 (RPQSARSNRDSSCQTR) shows a compositional bias: polar residues. Residues 1517-1529 (LKREKPAGRKETP) show a composition bias toward basic and acidic residues. The stretch at 1546-1565 (LIVDETPPCYSLTSSASSLS) is repeat 5. Positions 1556–1574 (SLTSSASSLSEPEAPEQPA) are enriched in low complexity. Phosphoserine occurs at positions 1563 and 1565. Positions 1608 to 1624 (PRRRTQVPGSRRRKPRA) are enriched in basic residues. Composition is skewed to low complexity over residues 1780-1795 (SGPC…SGTT) and 1839-1868 (LAKT…TPTG). The interval 1792–1871 (SGTTQPETVT…PLATPTGGPL (80 aa)) is required for localization to microtubules and function in microtubule stabilization. Position 1861 is a phosphoserine (serine 1861). Pro residues predominate over residues 1910–1921 (RVPPPLARPSPE). Low complexity-rich tracts occupy residues 1945–1955 (RMASARSSGSE) and 1983–1997 (LSSA…QAAS). Positions 2037–2114 (GLAPLAPRRT…PLPRVAPPGT (78 aa)) are interaction with MAPRE1 and MAPRE3. The span at 2165-2179 (DVATSKTNSSTSPSL) shows a compositional bias: polar residues.

The protein belongs to the adenomatous polyposis coli (APC) family. As to quaternary structure, interacts with PSRC1. Interacts with MAPRE3. Interacts with APC, CTNNB1, TP53BP2, MAPRE1 and possibly with AXIN2. Expressed in brain and other neural tissues.

It localises to the cytoplasm. Its subcellular location is the cytoskeleton. The protein resides in the golgi apparatus. The protein localises to the perinuclear region. Its function is as follows. Stabilizes microtubules and may regulate actin fiber dynamics through the activation of Rho family GTPases. May also function in Wnt signaling by promoting the rapid degradation of CTNNB1. This is Adenomatous polyposis coli protein 2 (Apc2) from Mus musculus (Mouse).